The following is a 21-amino-acid chain: Fibrinogen beta chain (21 aa).

Residues 1 to 11 (EFPTDYDEGED) are compositionally biased toward acidic residues. Residues 1–21 (EFPTDYDEGEDDRPKVGLGAR) form a disordered region. The residue at position 6 (Tyr6) is a Sulfotyrosine.

Heterohexamer; disulfide linked. Contains 2 sets of 3 non-identical chains (alpha, beta and gamma). The 2 heterotrimers are in head to head conformation with the N-termini in a small central domain. Post-translationally, conversion of fibrinogen to fibrin is triggered by thrombin, which cleaves fibrinopeptides A and B from alpha and beta chains, and thus exposes the N-terminal polymerization sites responsible for the formation of the soft clot.

Its subcellular location is the secreted. Its function is as follows. Cleaved by the protease thrombin to yield monomers which, together with fibrinogen alpha (FGA) and fibrinogen gamma (FGG), polymerize to form an insoluble fibrin matrix. Fibrin has a major function in hemostasis as one of the primary components of blood clots. In addition, functions during the early stages of wound repair to stabilize the lesion and guide cell migration during re-epithelialization. Was originally thought to be essential for platelet aggregation, based on in vitro studies using anticoagulated blood. However subsequent studies have shown that it is not absolutely required for thrombus formation in vivo. Enhances expression of SELP in activated platelets. Maternal fibrinogen is essential for successful pregnancy. Fibrin deposition is also associated with infection, where it protects against IFNG-mediated hemorrhage. May also facilitate the antibacterial immune response via both innate and T-cell mediated pathways. The chain is Fibrinogen beta chain (FGB) from Bison bonasus (European bison).